The following is a 334-amino-acid chain: ADP-L-glycero-D-manno-heptose-6-epimerase (334 aa).

Residues Phe11–Ile12, Asp32–Asn33, Lys39, Lys54, Gln77–Ser81, and Asn94 contribute to the NADP(+) site. The active-site Proton acceptor is the Tyr141. Lys145 serves as a coordination point for NADP(+). A substrate-binding site is contributed by Asn171. NADP(+) contacts are provided by Val172 and Lys180. Lys180 serves as the catalytic Proton acceptor. Substrate contacts are provided by residues Arg182, His189, Phe203–Asn206, Arg216, and Tyr295.

It belongs to the NAD(P)-dependent epimerase/dehydratase family. HldD subfamily. As to quaternary structure, homopentamer. Requires NADP(+) as cofactor.

It carries out the reaction ADP-D-glycero-beta-D-manno-heptose = ADP-L-glycero-beta-D-manno-heptose. The protein operates within nucleotide-sugar biosynthesis; ADP-L-glycero-beta-D-manno-heptose biosynthesis; ADP-L-glycero-beta-D-manno-heptose from D-glycero-beta-D-manno-heptose 7-phosphate: step 4/4. It functions in the pathway bacterial outer membrane biogenesis; LOS core biosynthesis. Catalyzes the interconversion between ADP-D-glycero-beta-D-manno-heptose and ADP-L-glycero-beta-D-manno-heptose via an epimerization at carbon 6 of the heptose. The chain is ADP-L-glycero-D-manno-heptose-6-epimerase from Neisseria gonorrhoeae.